The sequence spans 291 residues: Protease HtpX (291 aa).

Transmembrane regions (helical) follow at residues I4 to I24 and L36 to M56. H143 provides a ligand contact to Zn(2+). Residue E144 is part of the active site. H147 is a binding site for Zn(2+). Helical transmembrane passes span G151–S171 and F199–W219. Residue E225 coordinates Zn(2+).

This sequence belongs to the peptidase M48B family. Zn(2+) serves as cofactor.

The protein resides in the cell inner membrane. The polypeptide is Protease HtpX (Aliivibrio fischeri (strain ATCC 700601 / ES114) (Vibrio fischeri)).